Reading from the N-terminus, the 287-residue chain is Ciliary microtubule inner protein 6 (287 aa).

Basic and acidic residues-rich tracts occupy residues 1 to 15 (MEEKEDKHQQHKIED) and 25 to 34 (EEIKHEEKPG). Residues 1–42 (MEEKEDKHQQHKIEDAAITYVSENEEIKHEEKPGKSIHHSKS) are disordered. Residues 128-160 (GIVPLASPGTSAELQNNFIEYISFIHQYDARKT) are mn 1. The segment at 179 to 287 (KPGSRPTVPK…PLNPPIKKSE (109 aa)) is disordered. 2 stretches are compositionally biased toward basic and acidic residues: residues 203–212 (EQSKKTEKGN) and 232–245 (LEPKTHLSETDVRQ). The tract at residues 213–246 (SAESRMISPGLCQQNSQELLEPKTHLSETDVRQA) is mn 2.

The protein localises to the cell projection. It is found in the cilium. The sequence is that of Ciliary microtubule inner protein 6 from Homo sapiens (Human).